We begin with the raw amino-acid sequence, 445 residues long: 3-phosphoshikimate 1-carboxyvinyltransferase (445 aa).

The segment covering methionine 1–glycine 20 has biased composition (polar residues). Residues methionine 1–proline 24 form a disordered region. 3-phosphoshikimate is bound by residues lysine 28, serine 29, and arginine 33. Lysine 28 contacts phosphoenolpyruvate. 2 residues coordinate phosphoenolpyruvate: glycine 101 and arginine 129. 3-phosphoshikimate is bound by residues serine 174, glutamine 176, aspartate 322, and lysine 349. Glutamine 176 lines the phosphoenolpyruvate pocket. Catalysis depends on aspartate 322, which acts as the Proton acceptor. Positions 353 and 397 each coordinate phosphoenolpyruvate.

This sequence belongs to the EPSP synthase family. As to quaternary structure, monomer.

Its subcellular location is the cytoplasm. It carries out the reaction 3-phosphoshikimate + phosphoenolpyruvate = 5-O-(1-carboxyvinyl)-3-phosphoshikimate + phosphate. It functions in the pathway metabolic intermediate biosynthesis; chorismate biosynthesis; chorismate from D-erythrose 4-phosphate and phosphoenolpyruvate: step 6/7. In terms of biological role, catalyzes the transfer of the enolpyruvyl moiety of phosphoenolpyruvate (PEP) to the 5-hydroxyl of shikimate-3-phosphate (S3P) to produce enolpyruvyl shikimate-3-phosphate and inorganic phosphate. The sequence is that of 3-phosphoshikimate 1-carboxyvinyltransferase from Magnetococcus marinus (strain ATCC BAA-1437 / JCM 17883 / MC-1).